The chain runs to 243 residues: Cytochrome c oxidase subunit 2 (243 aa).

Over 1–34 (MNNIIHNDAPTPWGIYFQDGASPVYDGIVELHDQ) the chain is Mitochondrial intermembrane. The helical transmembrane segment at 35–55 (VLFYLLIVLVGVSWILFSTIL) threads the bilayer. The Mitochondrial matrix portion of the chain corresponds to 56–74 (RFRGSGIVHKYHNHSTTIE). A helical transmembrane segment spans residues 75–97 (FVWTVSPALLLIAIAFPSFKLLY). Residues 98–243 (LMDEVIDPSI…EKFLSWLDNQ (146 aa)) lie on the Mitochondrial intermembrane side of the membrane. Cu cation-binding residues include His178, Cys213, Glu215, Cys217, His221, and Met224. A Mg(2+)-binding site is contributed by Glu215.

Belongs to the cytochrome c oxidase subunit 2 family. Component of the cytochrome c oxidase (complex IV, CIV), a multisubunit enzyme composed of a catalytic core of 3 subunits and several supernumerary subunits. The complex exists as a monomer or a dimer and forms supercomplexes (SCs) in the inner mitochondrial membrane with ubiquinol-cytochrome c oxidoreductase (cytochrome b-c1 complex, complex III, CIII). It depends on Cu cation as a cofactor.

It localises to the mitochondrion inner membrane. It carries out the reaction 4 Fe(II)-[cytochrome c] + O2 + 8 H(+)(in) = 4 Fe(III)-[cytochrome c] + 2 H2O + 4 H(+)(out). In terms of biological role, component of the cytochrome c oxidase, the last enzyme in the mitochondrial electron transport chain which drives oxidative phosphorylation. The respiratory chain contains 3 multisubunit complexes succinate dehydrogenase (complex II, CII), ubiquinol-cytochrome c oxidoreductase (cytochrome b-c1 complex, complex III, CIII) and cytochrome c oxidase (complex IV, CIV), that cooperate to transfer electrons derived from NADH and succinate to molecular oxygen, creating an electrochemical gradient over the inner membrane that drives transmembrane transport and the ATP synthase. Cytochrome c oxidase is the component of the respiratory chain that catalyzes the reduction of oxygen to water. Electrons originating from reduced cytochrome c in the intermembrane space (IMS) are transferred via the dinuclear copper A center (CU(A)) of subunit 2 and heme A of subunit 1 to the active site in subunit 1, a binuclear center (BNC) formed by heme A3 and copper B (CU(B)). The BNC reduces molecular oxygen to 2 water molecules using 4 electrons from cytochrome c in the IMS and 4 protons from the mitochondrial matrix. The chain is Cytochrome c oxidase subunit 2 from Pneumocystis carinii.